A 298-amino-acid chain; its full sequence is Acetylglutamate kinase (298 aa).

Substrate is bound by residues Gly69–Gly70, Arg91, and Asn191.

The protein belongs to the acetylglutamate kinase family. ArgB subfamily.

It localises to the cytoplasm. It carries out the reaction N-acetyl-L-glutamate + ATP = N-acetyl-L-glutamyl 5-phosphate + ADP. It functions in the pathway amino-acid biosynthesis; L-arginine biosynthesis; N(2)-acetyl-L-ornithine from L-glutamate: step 2/4. Functionally, catalyzes the ATP-dependent phosphorylation of N-acetyl-L-glutamate. In Neisseria meningitidis serogroup C / serotype 2a (strain ATCC 700532 / DSM 15464 / FAM18), this protein is Acetylglutamate kinase.